The primary structure comprises 188 residues: Adenine phosphoribosyltransferase (188 aa).

This sequence belongs to the purine/pyrimidine phosphoribosyltransferase family. In terms of assembly, homodimer.

The protein localises to the cytoplasm. The enzyme catalyses AMP + diphosphate = 5-phospho-alpha-D-ribose 1-diphosphate + adenine. Its pathway is purine metabolism; AMP biosynthesis via salvage pathway; AMP from adenine: step 1/1. In terms of biological role, catalyzes a salvage reaction resulting in the formation of AMP, that is energically less costly than de novo synthesis. The chain is Adenine phosphoribosyltransferase from Burkholderia vietnamiensis (strain G4 / LMG 22486) (Burkholderia cepacia (strain R1808)).